The chain runs to 569 residues: Urease subunit alpha (569 aa).

The Urease domain occupies 131–569 (GGMDAHIHYI…LPMAQRYFLF (439 aa)). 3 residues coordinate Ni(2+): H136, H138, and K218. N6-carboxylysine is present on K218. H220 is a substrate binding site. The Ni(2+) site is built by H247 and H273. The Proton donor role is filled by H321. D361 is a Ni(2+) binding site.

The protein belongs to the metallo-dependent hydrolases superfamily. Urease alpha subunit family. In terms of assembly, heterotrimer of UreA (gamma), UreB (beta) and UreC (alpha) subunits. Three heterotrimers associate to form the active enzyme. It depends on Ni cation as a cofactor. In terms of processing, carboxylation allows a single lysine to coordinate two nickel ions.

The protein localises to the cytoplasm. It catalyses the reaction urea + 2 H2O + H(+) = hydrogencarbonate + 2 NH4(+). It functions in the pathway nitrogen metabolism; urea degradation; CO(2) and NH(3) from urea (urease route): step 1/1. In Agrobacterium fabrum (strain C58 / ATCC 33970) (Agrobacterium tumefaciens (strain C58)), this protein is Urease subunit alpha.